The primary structure comprises 1091 residues: ATP-dependent helicase/deoxyribonuclease subunit B (1091 aa).

Belongs to the helicase family. AddB/RexB type 2 subfamily. Heterodimer of AddA and RexB. The cofactor is Mg(2+).

In terms of biological role, the heterodimer acts as both an ATP-dependent DNA helicase and an ATP-dependent, dual-direction single-stranded exonuclease. Recognizes the chi site generating a DNA molecule suitable for the initiation of homologous recombination. This subunit has 5' -&gt; 3' nuclease activity but not helicase activity. In Streptococcus pneumoniae serotype 19F (strain G54), this protein is ATP-dependent helicase/deoxyribonuclease subunit B.